The chain runs to 375 residues: Matrix protein (375 aa).

This sequence belongs to the morbillivirus/respirovirus/rubulavirus M protein family.

The protein localises to the virion. Its function is as follows. The M protein has a crucial role in virus assembly and interacts with the RNP complex as well as with the viral membrane. The protein is Matrix protein (M) of Homo sapiens (Human).